A 255-amino-acid polypeptide reads, in one-letter code: tRNA (guanine-N(7)-)-methyltransferase (255 aa).

4 residues coordinate S-adenosyl-L-methionine: Glu86, Glu111, Asp138, and Asp161. The active site involves Asp161. Residues Lys165, Asp197, and 234-237 each bind substrate; that span reads TKFE.

Belongs to the class I-like SAM-binding methyltransferase superfamily. TrmB family.

It carries out the reaction guanosine(46) in tRNA + S-adenosyl-L-methionine = N(7)-methylguanosine(46) in tRNA + S-adenosyl-L-homocysteine. It functions in the pathway tRNA modification; N(7)-methylguanine-tRNA biosynthesis. In terms of biological role, catalyzes the formation of N(7)-methylguanine at position 46 (m7G46) in tRNA. The protein is tRNA (guanine-N(7)-)-methyltransferase of Pasteurella multocida (strain Pm70).